Consider the following 450-residue polypeptide: MTRRYFGTDGIRGQSNVFPMTPDLAMKVGIAVGTILRRGHHRHRVVIGKDTRLSGYMLETALVAGFTAAGLDVFLLGPIPTPAVAMLTRSLRADIGVMVSASHNPFADNGIKLFGPDGYKLSDELEAEIEALLNQEAPLPLARAEDIGRAKRVDGDIYRYIEFVKRTLPRDVTLSGLRIAIDCANGAAYKVAPTALWELGAEVVTIGNEPNGLNINLECGSTHPAALQKKVHEVRADIGIALDGDADRVIIVDETGAIVDGDQLMAVIAESWANDQTLKGGGIVATVMSNLGLERFLGGKGLTLARTKVGDRHVVEHMRQNHYNIGGEQSGHIVLSDFGTTGDGLVAALQILAAVKRTGKTVSQICHRFDPVPQLLRNVRISGGKPLEDSFVRQAIADAESELARNGRLVIRPSGTEPLIRVMAEGDDRSQIERIVNDLIGVIANSREAA.

The Phosphoserine intermediate role is filled by serine 102. Mg(2+) is bound by residues serine 102, aspartate 243, aspartate 245, and aspartate 247. Serine 102 carries the post-translational modification Phosphoserine.

It belongs to the phosphohexose mutase family. Requires Mg(2+) as cofactor. Activated by phosphorylation.

It catalyses the reaction alpha-D-glucosamine 1-phosphate = D-glucosamine 6-phosphate. Functionally, catalyzes the conversion of glucosamine-6-phosphate to glucosamine-1-phosphate. This Allorhizobium ampelinum (strain ATCC BAA-846 / DSM 112012 / S4) (Agrobacterium vitis (strain S4)) protein is Phosphoglucosamine mutase.